We begin with the raw amino-acid sequence, 431 residues long: Beta-lactamase hydrolase-like protein (431 aa).

The Zn(2+) site is built by His212, His214, and His286. Asp309 serves as a coordination point for substrate.

The protein belongs to the metallo-beta-lactamase superfamily. It depends on Zn(2+) as a cofactor.

Its function is as follows. Could play a role in cell adherence or biofilm development. In Xylella fastidiosa (strain Temecula1 / ATCC 700964), this protein is Beta-lactamase hydrolase-like protein.